A 1047-amino-acid chain; its full sequence is Helicase-like transcription factor CHR27 (1047 aa).

Residues 1–11 (MDSAIEISSGS) are compositionally biased toward low complexity. Disordered stretches follow at residues 1–89 (MDSA…SGSG), 103–130 (RTLPPSFNSPPLPARSGTNNISNASGSR), and 145–174 (KRTLPPSFNPPPLPSRSGTNNIRNAGGSRF). 2 stretches are compositionally biased toward polar residues: residues 52 to 88 (TNQAPPNGASSDTSRPGVSKPFTGNGNTVNSRISSGS) and 118 to 128 (SGTNNISNASG). One can recognise a Helicase ATP-binding domain in the interval 296-597 (ETSSFNCPGG…YSYFRFLRYD (302 aa)). 309-316 (DDQGLGKT) provides a ligand contact to ATP. 2 disordered regions span residues 349 to 407 (ADDE…TRAF) and 511 to 533 (VGASKKSKRRGRKSTNDTSSEPD). Over residues 354–368 (DNAKHESGSHVKPEL) the composition is skewed to basic and acidic residues. Residues 370–379 (VSSNSETSVL) are compositionally biased toward polar residues. Acidic residues predominate over residues 385 to 400 (DENDSSDMEKAEDEEA). Residues 511–523 (VGASKKSKRRGRK) are compositionally biased toward basic residues. The segment at 751 to 790 (CYECNEPPEKPVVTLCGHIFCYECVLEYITGDENTCPVPR) adopts an RING-type; degenerate zinc-finger fold. Over residues 851–868 (QPDSPNSAQHGQMPSSSR) the composition is skewed to polar residues. The interval 851–873 (QPDSPNSAQHGQMPSSSRPYDDD) is disordered. One can recognise a Helicase C-terminal domain in the interval 887–1042 (SPSQGAVKTI…ATRLTVDDLK (156 aa)).

This sequence belongs to the SNF2/RAD54 helicase family. RAD16 subfamily. Interacts with SUVR2. Interacts with itself.

It localises to the nucleus. Probable helicase-like transcription factor involved in transcriptional gene silencing. Associates with SUVR2 and contributes to transcriptional gene silencing at RNA-directed DNA methylation (RdDM) target loci but also at RdDM-independent target loci. May be involved in nucleosome positioning to form ordered nucleosome arrays on chromatin. Associates with SUVR2 and functions redundantly with FRG2. Required for the efficient methylation of a broad range of RdDM target loci. This Arabidopsis thaliana (Mouse-ear cress) protein is Helicase-like transcription factor CHR27.